A 383-amino-acid polypeptide reads, in one-letter code: Adaptive-response sensory kinase SasA (383 aa).

The Histidine kinase domain occupies 152–365 (MVAHELRTPL…CFTFTVPIWQ (214 aa)). Residue His-155 is modified to Phosphohistidine; by autocatalysis.

As to quaternary structure, homooligomerizes. Interacts with KaiC. Participates in the KaiABC clock complex, whose core is composed of a KaiC homohexamer, 6 KaiB and up to 6 KaiA dimers. SasA and KaiB(fs) compete to bind to KaiC.

The catalysed reaction is ATP + protein L-histidine = ADP + protein N-phospho-L-histidine.. Its function is as follows. Member of the two-component regulatory system SasA/RpaA involved in genome-wide circadian gene expression. One of several clock output pathways. Participates in the Kai clock protein complex, the main circadian regulator in cyanobacteria, via its interaction with KaiC. KaiC enhances the autophosphorylation activity of SasA, which then transfers its phosphate group to RpaA to activate it. In addition to its output function, recruits fold-shifted KaiB (KaiB(fs)) to KaiC to cooperatively form the KaiB(6):KaiC(6) complex (independent of SasA kinase activity). Required for robustness of the circadian rhythm of gene expression and is involved in clock output, also required for adaptation to light/dark cycles. In Synechococcus sp. (strain CC9902), this protein is Adaptive-response sensory kinase SasA.